A 426-amino-acid chain; its full sequence is Tryptophan--tRNA ligase (426 aa).

The 'HIGH' region motif lies at Pro-66 to Asn-74. Positions Lys-314 to Ser-318 match the 'KMSKS' region motif.

It belongs to the class-I aminoacyl-tRNA synthetase family.

It is found in the cytoplasm. The enzyme catalyses tRNA(Trp) + L-tryptophan + ATP = L-tryptophyl-tRNA(Trp) + AMP + diphosphate + H(+). This Thermoplasma acidophilum (strain ATCC 25905 / DSM 1728 / JCM 9062 / NBRC 15155 / AMRC-C165) protein is Tryptophan--tRNA ligase.